The following is a 530-amino-acid chain: uncharacterized protein (530 aa).

Composition is skewed to basic and acidic residues over residues 1–11 (MTALNDTERAV) and 28–38 (PRSEETASERP). The interval 1-38 (MTALNDTERAVRNWTAGRPHRPAPMRPPRSEETASERP) is disordered. The Cytoplasmic portion of the chain corresponds to 1–50 (MTALNDTERAVRNWTAGRPHRPAPMRPPRSEETASERPSRYYPTWLPSRS). A helical membrane pass occupies residues 51 to 71 (FIAAVIAIGGMQLLATMDSTV). Residues 72 to 91 (AIVALPKIQNELSLSDAGRS) lie on the Extracellular side of the membrane. The chain crosses the membrane as a helical span at residues 92–112 (WVITAYVLTFGGLMLLGGRLG). The Cytoplasmic segment spans residues 113–119 (DTIGRKR). The chain crosses the membrane as a helical span at residues 120–140 (TFIVGVALFTISSVLCAVAWD). Over 141–150 (EATLVIARLS) the chain is Extracellular. A helical membrane pass occupies residues 151 to 171 (QGVGSAIASPTGLALVATTFP). Over 172-180 (KGPARNAAT) the chain is Cytoplasmic. A helical membrane pass occupies residues 181 to 201 (AVFAAMTAIGSVMGLVVGGAL). Over 202–203 (TE) the chain is Extracellular. Residues 204 to 224 (VSWRWAFLVNVPIGLVMIYLA) traverse the membrane as a helical segment. At 225-239 (RTALRETNKERMKLD) the chain is on the cytoplasmic side. A helical membrane pass occupies residues 240–260 (ATGAILATLACTAAVFAFSIG). Over 261–266 (PEKGWM) the chain is Extracellular. The helical transmembrane segment at 267-287 (SGITIGSGLVALAAAVAFVIV) threads the bilayer. Residues 288-306 (ERTAENPVVPFHLFRDRNR) are Cytoplasmic-facing. A helical membrane pass occupies residues 307–327 (LVTFSAILLAGGVMFSLTVCI). At 328 to 343 (GLYVQDILGYSALRAG) the chain is on the extracellular side. Residues 344–364 (VGFIPFVIAMGIGLGVSSQLV) traverse the membrane as a helical segment. Over 365–370 (SRFSPR) the chain is Cytoplasmic. Residues 371–391 (VLTIGGGYLLFGAMLYGSFFM) traverse the membrane as a helical segment. At 392 to 400 (HRGVPYFPN) the chain is on the extracellular side. A helical transmembrane segment spans residues 401-421 (LVMPIVVGGIGIGMAVVPLTL). Residues 422–437 (SAIAGVGFDQIGPVSA) lie on the Cytoplasmic side of the membrane. Residues 438–458 (IALMLQSLGGPLVLAVIQAVI) traverse the membrane as a helical segment. At 459 to 488 (TSRTLYLGGTTGPVKFMNDVQLAALDHAYT) the chain is on the extracellular side. A helical transmembrane segment spans residues 489–509 (YGLLWVAGAAIIVGGMALFIG). The Cytoplasmic segment spans residues 510-530 (YTPQQVAHAQEVKEAIDAGEL).

The protein belongs to the major facilitator superfamily.

The protein resides in the cell membrane. This is an uncharacterized protein from Mycobacterium tuberculosis (strain CDC 1551 / Oshkosh).